The chain runs to 230 residues: Vacuole-localized protein 4 (230 aa).

A signal peptide spans Met-1 to Ala-19.

The protein localises to the vacuole. Its function is as follows. Vacuolar protein required for aerial conidiation and conidial maturation. Also involved in blastospore production and cell cycle. Plays a vital role in the secretion of Pr1 proteases for cuticular penetration and hence contributes significantly to host infection and virulence. This Beauveria bassiana (strain ARSEF 2860) (White muscardine disease fungus) protein is Vacuole-localized protein 4.